The primary structure comprises 280 residues: Ribosomal RNA small subunit methyltransferase I (280 aa).

The protein belongs to the methyltransferase superfamily. RsmI family.

Its subcellular location is the cytoplasm. The enzyme catalyses cytidine(1402) in 16S rRNA + S-adenosyl-L-methionine = 2'-O-methylcytidine(1402) in 16S rRNA + S-adenosyl-L-homocysteine + H(+). Its function is as follows. Catalyzes the 2'-O-methylation of the ribose of cytidine 1402 (C1402) in 16S rRNA. The sequence is that of Ribosomal RNA small subunit methyltransferase I from Rickettsia prowazekii (strain Madrid E).